The chain runs to 506 residues: Spindle pole body protein CSA6 (506 aa).

4 disordered regions span residues 18–121 (SPIK…PNEN), 252–276 (EKHNNPQDSPPKVKIATPDPEVETQ), 329–429 (PSSP…YSIR), and 447–470 (KNDQKDTNSPEESNTDGKEEEEKV). Positions 38-48 (IDLRDYMDRQK) are enriched in basic and acidic residues. Positions 50 to 59 (SRNYSDSEYT) are enriched in polar residues. The segment covering 63–72 (IKREKPETKQ) has biased composition (basic and acidic residues). Residues 94–119 (PTKNYSQHVMQERSAPNSPQKKSLPN) are compositionally biased toward polar residues. 2 stretches are compositionally biased toward polar residues: residues 330–353 (SSPNHQTQPVFQSTPQSKVESVNL) and 361–389 (QPSHVSSNSQQNLSDKSRTSIPSRDNPSP). 2 stretches are compositionally biased toward basic and acidic residues: residues 412-422 (EWTREREERDG) and 461-470 (TDGKEEEEKV).

Its subcellular location is the cytoplasm. The protein localises to the cytoskeleton. It localises to the microtubule organizing center. The protein resides in the spindle pole body. Its function is as follows. Plays a role in mitotic spindle pole body organization, possibly at the point of spindle pole body separation. Required for mitotic exit. The protein is Spindle pole body protein CSA6 of Candida tropicalis (strain ATCC MYA-3404 / T1) (Yeast).